Here is a 944-residue protein sequence, read N- to C-terminus: UvrABC system protein A (944 aa).

Residues 1 to 242 enclose the ABC transporter 1 domain; the sequence is MSKVDFLHIK…GKGIVKVENV (242 aa). 34–41 is an ATP binding site; sequence GLSGSGKS. The segment at 256–283 adopts a C4-type; degenerate zinc-finger fold; sequence CPKGDFEMPKIETRLFSFNSPYGMCQNC. 2 ABC transporter domains span residues 359–597 and 610–935; these read EEID…KYLS and SGSG…EKSY. 643-650 is an ATP binding site; sequence GVSGSGKS. A C4-type zinc finger spans residues 744-770; it reads CEKCSGDGSIKIEMFFLPNVYITCDHC.

This sequence belongs to the ABC transporter superfamily. UvrA family. Forms a heterotetramer with UvrB during the search for lesions.

It localises to the cytoplasm. The UvrABC repair system catalyzes the recognition and processing of DNA lesions. UvrA is an ATPase and a DNA-binding protein. A damage recognition complex composed of 2 UvrA and 2 UvrB subunits scans DNA for abnormalities. When the presence of a lesion has been verified by UvrB, the UvrA molecules dissociate. This Mycoplasmopsis pulmonis (strain UAB CTIP) (Mycoplasma pulmonis) protein is UvrABC system protein A.